We begin with the raw amino-acid sequence, 515 residues long: DEP domain-containing protein 7 (515 aa).

One can recognise a DEP domain in the interval 27–118; the sequence is LQTQVEVKRR…SSCSLYRFLN (92 aa). A compositionally biased stretch (polar residues) spans 121 to 144; the sequence is TPSTSGSETIGSGYNTQRNTNSPP. Residues 121 to 160 form a disordered region; it reads TPSTSGSETIGSGYNTQRNTNSPPFQRMEDSAYSNNSPVK.

The protein belongs to the DEPDC7 family.

This Danio rerio (Zebrafish) protein is DEP domain-containing protein 7 (depdc7).